A 284-amino-acid polypeptide reads, in one-letter code: D-tagatose-1,6-bisphosphate aldolase subunit GatY (284 aa).

Asp82 acts as the Proton donor in catalysis. The Zn(2+) site is built by His83 and His180. Residue Gly181 coordinates dihydroxyacetone phosphate. His208 contacts Zn(2+). Residues 209–211 (GAS) and 230–233 (NVAT) contribute to the dihydroxyacetone phosphate site.

This sequence belongs to the class II fructose-bisphosphate aldolase family. TagBP aldolase GatY subfamily. Forms a complex with GatZ. Zn(2+) serves as cofactor.

It catalyses the reaction D-tagatofuranose 1,6-bisphosphate = D-glyceraldehyde 3-phosphate + dihydroxyacetone phosphate. It participates in carbohydrate metabolism; D-tagatose 6-phosphate degradation; D-glyceraldehyde 3-phosphate and glycerone phosphate from D-tagatose 6-phosphate: step 2/2. In terms of biological role, catalytic subunit of the tagatose-1,6-bisphosphate aldolase GatYZ, which catalyzes the reversible aldol condensation of dihydroxyacetone phosphate (DHAP or glycerone-phosphate) with glyceraldehyde 3-phosphate (G3P) to produce tagatose 1,6-bisphosphate (TBP). Requires GatZ subunit for full activity and stability. Is involved in the catabolism of galactitol. The protein is D-tagatose-1,6-bisphosphate aldolase subunit GatY of Escherichia coli O139:H28 (strain E24377A / ETEC).